The primary structure comprises 317 residues: MTSLTNSLNPARSLAPASNGDVADFFALLKPRVMALVIFTALVGMTVTKSHVNPVIAAVSLLMIAVGAGASGCLNMWWDADVDAVMSRTRTRPIPAGKIRPDEALAFGMTLSVGSVLMLGLAANWLAAGLLAFTIAFYAVIYSMWLKRATAQNIVIGGAAGALPPMIGQAVVTGTVGIEGLVLFLIIFVWTPPHFWALALVKSGDYAKAGIPMMPNVAGPDSTRRQIVAYTLLLAPLGLAPVALGFGGLIYGLVALLGGLAMLALSLQVYHRREGEGADKAAMGLFGFSILYLFLLFSALLAEQGLGLFRPVSQLFG.

Helical transmembrane passes span 25–45 (FFAL…LVGM), 54–74 (PVIA…SGCL), 126–146 (LAAG…SMWL), 154–174 (IVIG…VVTG), 181–201 (LVLF…LALV), 227–244 (IVAY…PVAL), 249–271 (LIYG…QVYH), and 281–301 (AAMG…SALL).

The protein belongs to the UbiA prenyltransferase family. Protoheme IX farnesyltransferase subfamily.

It is found in the cell inner membrane. It catalyses the reaction heme b + (2E,6E)-farnesyl diphosphate + H2O = Fe(II)-heme o + diphosphate. The protein operates within porphyrin-containing compound metabolism; heme O biosynthesis; heme O from protoheme: step 1/1. Its function is as follows. Converts heme B (protoheme IX) to heme O by substitution of the vinyl group on carbon 2 of heme B porphyrin ring with a hydroxyethyl farnesyl side group. The sequence is that of Protoheme IX farnesyltransferase from Methylobacterium sp. (strain 4-46).